The following is a 1088-amino-acid chain: DNA-directed RNA polymerase subunit beta (1088 aa).

It belongs to the RNA polymerase beta chain family. In terms of assembly, in plastids the minimal PEP RNA polymerase catalytic core is composed of four subunits: alpha, beta, beta', and beta''. When a (nuclear-encoded) sigma factor is associated with the core the holoenzyme is formed, which can initiate transcription.

The protein resides in the plastid. Its subcellular location is the chloroplast. The enzyme catalyses RNA(n) + a ribonucleoside 5'-triphosphate = RNA(n+1) + diphosphate. In terms of biological role, DNA-dependent RNA polymerase catalyzes the transcription of DNA into RNA using the four ribonucleoside triphosphates as substrates. The sequence is that of DNA-directed RNA polymerase subunit beta from Ostreococcus tauri.